Reading from the N-terminus, the 220-residue chain is uncharacterized protein (220 aa).

Residues 20-42 (FFKKLVPIIIIISIVVITIMVII) form a helical membrane-spanning segment.

The protein resides in the membrane. This is an uncharacterized protein from Rickettsia prowazekii (strain Madrid E).